Reading from the N-terminus, the 268-residue chain is 4-hydroxy-tetrahydrodipicolinate reductase (268 aa).

NAD(+)-binding positions include 10 to 15 (GAGGRM), Asp36, 99 to 101 (GTT), and 123 to 126 (APNM). His156 (proton donor/acceptor) is an active-site residue. Position 157 (His157) interacts with (S)-2,3,4,5-tetrahydrodipicolinate. Lys160 (proton donor) is an active-site residue. A (S)-2,3,4,5-tetrahydrodipicolinate-binding site is contributed by 166-167 (GT).

It belongs to the DapB family.

The protein resides in the cytoplasm. It carries out the reaction (S)-2,3,4,5-tetrahydrodipicolinate + NAD(+) + H2O = (2S,4S)-4-hydroxy-2,3,4,5-tetrahydrodipicolinate + NADH + H(+). The catalysed reaction is (S)-2,3,4,5-tetrahydrodipicolinate + NADP(+) + H2O = (2S,4S)-4-hydroxy-2,3,4,5-tetrahydrodipicolinate + NADPH + H(+). It functions in the pathway amino-acid biosynthesis; L-lysine biosynthesis via DAP pathway; (S)-tetrahydrodipicolinate from L-aspartate: step 4/4. Its function is as follows. Catalyzes the conversion of 4-hydroxy-tetrahydrodipicolinate (HTPA) to tetrahydrodipicolinate. The polypeptide is 4-hydroxy-tetrahydrodipicolinate reductase (Dechloromonas aromatica (strain RCB)).